The chain runs to 262 residues: Shikimate dehydrogenase (NADP(+)) (262 aa).

Shikimate is bound by residues 15-17 (SRS) and T62. Catalysis depends on K66, which acts as the Proton acceptor. E78 serves as a coordination point for NADP(+). The shikimate site is built by N87 and D102. NADP(+) contacts are provided by residues 126 to 130 (GAGGA), 150 to 155 (NRTLAR), and M214. Position 216 (Y216) interacts with shikimate. G236 is a binding site for NADP(+).

The protein belongs to the shikimate dehydrogenase family. Homodimer.

It catalyses the reaction shikimate + NADP(+) = 3-dehydroshikimate + NADPH + H(+). Its pathway is metabolic intermediate biosynthesis; chorismate biosynthesis; chorismate from D-erythrose 4-phosphate and phosphoenolpyruvate: step 4/7. Its function is as follows. Involved in the biosynthesis of the chorismate, which leads to the biosynthesis of aromatic amino acids. Catalyzes the reversible NADPH linked reduction of 3-dehydroshikimate (DHSA) to yield shikimate (SA). This Acinetobacter baumannii (strain SDF) protein is Shikimate dehydrogenase (NADP(+)).